Reading from the N-terminus, the 116-residue chain is Iron-sulfur cluster insertion protein ErpA (116 aa).

Iron-sulfur cluster is bound by residues C44, C108, and C110.

Belongs to the HesB/IscA family. As to quaternary structure, homodimer. Iron-sulfur cluster serves as cofactor.

Functionally, required for insertion of 4Fe-4S clusters for at least IspG. This chain is Iron-sulfur cluster insertion protein ErpA, found in Ectopseudomonas mendocina (strain ymp) (Pseudomonas mendocina).